Reading from the N-terminus, the 601-residue chain is Elongation factor 4 (601 aa).

The 183-residue stretch at 7–189 (RNIRNFSIIA…AIVHRIPPPK (183 aa)) folds into the tr-type G domain. Residues 19 to 24 (DHGKST) and 136 to 139 (NKID) contribute to the GTP site.

The protein belongs to the TRAFAC class translation factor GTPase superfamily. Classic translation factor GTPase family. LepA subfamily.

It localises to the cell inner membrane. The enzyme catalyses GTP + H2O = GDP + phosphate + H(+). Its function is as follows. Required for accurate and efficient protein synthesis under certain stress conditions. May act as a fidelity factor of the translation reaction, by catalyzing a one-codon backward translocation of tRNAs on improperly translocated ribosomes. Back-translocation proceeds from a post-translocation (POST) complex to a pre-translocation (PRE) complex, thus giving elongation factor G a second chance to translocate the tRNAs correctly. Binds to ribosomes in a GTP-dependent manner. The polypeptide is Elongation factor 4 (Xanthomonas campestris pv. campestris (strain ATCC 33913 / DSM 3586 / NCPPB 528 / LMG 568 / P 25)).